Consider the following 602-residue polypeptide: Aspartate--tRNA(Asp/Asn) ligase (602 aa).

Residue E176 participates in L-aspartate binding. The aspartate stretch occupies residues 200–203; that stretch reads QQFK. L-aspartate contacts are provided by R222 and H452. An ATP-binding site is contributed by 222–224; that stretch reads RDE. Residue E490 coordinates ATP. R497 contributes to the L-aspartate binding site. 542 to 545 lines the ATP pocket; the sequence is GIDR.

Belongs to the class-II aminoacyl-tRNA synthetase family. Type 1 subfamily. In terms of assembly, homodimer.

The protein resides in the cytoplasm. The catalysed reaction is tRNA(Asx) + L-aspartate + ATP = L-aspartyl-tRNA(Asx) + AMP + diphosphate. Functionally, aspartyl-tRNA synthetase with relaxed tRNA specificity since it is able to aspartylate not only its cognate tRNA(Asp) but also tRNA(Asn). Reaction proceeds in two steps: L-aspartate is first activated by ATP to form Asp-AMP and then transferred to the acceptor end of tRNA(Asp/Asn). The polypeptide is Aspartate--tRNA(Asp/Asn) ligase (Rickettsia canadensis (strain McKiel)).